A 136-amino-acid polypeptide reads, in one-letter code: Protein PsiE homolog (136 aa).

4 helical membrane passes run 15-35, 58-78, 82-102, and 108-128; these read AMQA…VVFL, VEGL…VKYF, FHFP…RLII, and PLAV…LWLC.

This sequence belongs to the PsiE family.

The protein resides in the cell inner membrane. This chain is Protein PsiE homolog, found in Klebsiella pneumoniae subsp. pneumoniae (strain ATCC 700721 / MGH 78578).